The chain runs to 440 residues: Cyclic dipeptide prenyltransferase (440 aa).

The disordered stretch occupies residues 1-33 (MDGEMTASPPDISACDTSAVDEQTGQSGQSQAP). Positions 20–32 (VDEQTGQSGQSQA) are enriched in polar residues. The substrate site is built by Thr-108 and Glu-116. 3 residues coordinate dimethylallyl diphosphate: Arg-129, Lys-219, and Tyr-221. Phe-223 is a binding site for substrate. Positions 286, 288, 366, 431, and 435 each coordinate dimethylallyl diphosphate.

The protein belongs to the tryptophan dimethylallyltransferase family.

The enzyme catalyses harmol + dimethylallyl diphosphate = 6-(3-dimethylallyl)harmol + diphosphate. The catalysed reaction is an N-terminal L-tryptophanyl-L-alpha-aminoacyl-[peptide] + H2O = an N-terminal L-alpha-aminoacyl-[peptide] + L-tryptophan. It catalyses the reaction (R)-benzodiazepinedione + dimethylallyl diphosphate = (2S,3R,11R)-aszonalenin + diphosphate. It carries out the reaction (S)-benzodiazepinedione + dimethylallyl diphosphate = (2S,3R,11S)-aszonalenin + diphosphate. Its function is as follows. Prenyltransferase that catalyzes reverse prenylation at position N-1 of tryptophan-containing cyclic dipeptides. Accepts only dimethylallyl diphosphate (DMAPP) as the prenyl donor but shows broad substrate specificities toward its aromatic substrates. Also shows tryptophan aminopeptidase activity with preference for linear peptides containing a tryptophanyl moiety at the N-terminus. The protein is Cyclic dipeptide prenyltransferase of Aspergillus fumigatus (Neosartorya fumigata).